Reading from the N-terminus, the 150-residue chain is Large ribosomal subunit protein bL9 (150 aa).

Belongs to the bacterial ribosomal protein bL9 family.

Binds to the 23S rRNA. The sequence is that of Large ribosomal subunit protein bL9 from Pseudoalteromonas atlantica (strain T6c / ATCC BAA-1087).